Reading from the N-terminus, the 614-residue chain is V-type proton ATPase catalytic subunit A (614 aa).

247–254 (GAFGCGKT) is an ATP binding site.

This sequence belongs to the ATPase alpha/beta chains family. V-ATPase is a heteromultimeric enzyme made up of two complexes: the ATP-hydrolytic V1 complex and the proton translocation V0 complex. The V1 complex consists of three catalytic AB heterodimers that form a heterohexamer, three peripheral stalks each consisting of EG heterodimers, one central rotor including subunits D and F, and the regulatory subunits C and H. The proton translocation complex V0 consists of the proton transport subunit a, a ring of proteolipid subunits c9c'', rotary subunit d, subunits e and f, and the accessory subunits VhaAC45 and ATP6AP2.

It carries out the reaction ATP + H2O + 4 H(+)(in) = ADP + phosphate + 5 H(+)(out). Its activity is regulated as follows. ATP hydrolysis occurs at the interface between the nucleotide-binding domains of subunits A and B. ATP hydrolysis triggers a conformational change in the subunits D and F, which induces a shift of subunit d. The c-ring is subsequently rotated and results in a continuous proton translocation across the membrane. Functionally, catalytic subunit of the V1 complex of vacuolar(H+)-ATPase (V-ATPase), a multisubunit enzyme composed of a peripheral complex (V1) that hydrolyzes ATP and a membrane integral complex (V0) that translocates protons. V-ATPase is responsible for acidifying and maintaining the pH of intracellular compartments and in some cell types, is targeted to the plasma membrane, where it is responsible for acidifying the extracellular environment. This chain is V-type proton ATPase catalytic subunit A, found in Anopheles gambiae (African malaria mosquito).